A 112-amino-acid chain; its full sequence is Ciliary microtubule inner protein 3 (112 aa).

A disordered region spans residues 1–34 (MCKDSQKPSVPSHGPKTPSCKGVKAPHSSRPRAW).

This sequence belongs to the CIMIP3-like family.

The protein resides in the cytoplasm. It localises to the cytoskeleton. It is found in the flagellum axoneme. The sequence is that of Ciliary microtubule inner protein 3 from Homo sapiens (Human).